The chain runs to 166 residues: Ribosome maturation factor RimM (166 aa).

The PRC barrel domain occupies 91–165 (DDEFYHADLI…RIVADPPEGL (75 aa)).

This sequence belongs to the RimM family. Binds ribosomal protein uS19.

It localises to the cytoplasm. Its function is as follows. An accessory protein needed during the final step in the assembly of 30S ribosomal subunit, possibly for assembly of the head region. Essential for efficient processing of 16S rRNA. May be needed both before and after RbfA during the maturation of 16S rRNA. It has affinity for free ribosomal 30S subunits but not for 70S ribosomes. The chain is Ribosome maturation factor RimM from Dinoroseobacter shibae (strain DSM 16493 / NCIMB 14021 / DFL 12).